Here is a 37-residue protein sequence, read N- to C-terminus: Cytochrome b6-f complex subunit 5 (37 aa).

The chain crosses the membrane as a helical span at residues 5-25 (LLSGIVLGMIPITLAGLFVTA).

Belongs to the PetG family. As to quaternary structure, the 4 large subunits of the cytochrome b6-f complex are cytochrome b6, subunit IV (17 kDa polypeptide, PetD), cytochrome f and the Rieske protein, while the 4 small subunits are PetG, PetL, PetM and PetN. The complex functions as a dimer.

The protein resides in the plastid. The protein localises to the chloroplast thylakoid membrane. Component of the cytochrome b6-f complex, which mediates electron transfer between photosystem II (PSII) and photosystem I (PSI), cyclic electron flow around PSI, and state transitions. PetG is required for either the stability or assembly of the cytochrome b6-f complex. The polypeptide is Cytochrome b6-f complex subunit 5 (Mesostigma viride (Green alga)).